A 470-amino-acid polypeptide reads, in one-letter code: Suppressor of SWI4 1 homolog (470 aa).

The region spanning 29–292 (PHSFVFTRGR…LIKIQEGVGN (264 aa)) is the Brix domain. 2 positions are modified to phosphoserine: Ser-238 and Ser-240. 2 disordered regions span residues 240 to 264 (SEVEPDGEHNTTELPQAVAGRGNMQ) and 323 to 470 (AQRQ…RRRN). Positions 342-355 (AHKKKSLAGIKRAR) are enriched in basic residues. The residue at position 362 (Ser-362) is a Phosphoserine. The residue at position 441 (Lys-441) is an N6-acetyllysine. A compositionally biased stretch (basic residues) spans 447 to 457 (QRGKAKPRPRA).

The protein resides in the nucleus. Its subcellular location is the nucleolus. Its function is as follows. May have a role in cell growth. This Mus musculus (Mouse) protein is Suppressor of SWI4 1 homolog (Ppan).